The following is a 144-amino-acid chain: Large ribosomal subunit protein uL16 (144 aa).

This sequence belongs to the universal ribosomal protein uL16 family. Part of the 50S ribosomal subunit.

In terms of biological role, binds 23S rRNA and is also seen to make contacts with the A and possibly P site tRNAs. The protein is Large ribosomal subunit protein uL16 of Porphyromonas gingivalis (strain ATCC 33277 / DSM 20709 / CIP 103683 / JCM 12257 / NCTC 11834 / 2561).